The sequence spans 486 residues: MISLDTLSLFLSINENDLVEELVMTLLASPQLAVFFEKFPVLKNVLTRDLPRHKADILQQLKSTAVPPLLEAEFQRFQQYQALSLRDFNAGLPDLLAWLAHQASPFNEKAQALIANNDTQQCNSAQQTLFLQRWRLSLTLQTLTLNQQLLDKEREKLLAELQQRLAMSGQLAPVLADDDEAAAGRLWDLTRGELQRDDYQLIVQYGDFLASQPELLKLAQRLGRSREAKPVPSDDAPAEIFHQPVREPASVPEEVNGLHQSDDILRLLPPELATLGISELEIEFYRRLVEKRLLTYRLQGESWHDHITQRPVAHQHHDPQQRGPFIVCVDTSGSMGGFNERCAKAFCLALLKVALAEKRRCYIMLFAHQVISYELTAGDGISQAIRFLSQRFRGGTDLAACLEAVLVKLSDVQWHDADAVVLSDFIAQRLPDALITRVRTHQEQQRQRFHAVAMSDHGKPGIMRIFNHIWRFDTGLKSRLLRRWKR.

The protein belongs to the ViaA family. Homodimer. Interacts with RavA.

The protein resides in the cytoplasm. Its function is as follows. Component of the RavA-ViaA chaperone complex, which may act on the membrane to optimize the function of some of the respiratory chains. ViaA stimulates the ATPase activity of RavA. This chain is Regulatory protein ViaA, found in Erwinia tasmaniensis (strain DSM 17950 / CFBP 7177 / CIP 109463 / NCPPB 4357 / Et1/99).